A 394-amino-acid chain; its full sequence is Ornithine aminotransferase 1 (394 aa).

An N6-(pyridoxal phosphate)lysine modification is found at K252.

It belongs to the class-III pyridoxal-phosphate-dependent aminotransferase family. OAT subfamily. It depends on pyridoxal 5'-phosphate as a cofactor.

It localises to the cytoplasm. The enzyme catalyses a 2-oxocarboxylate + L-ornithine = L-glutamate 5-semialdehyde + an L-alpha-amino acid. It participates in amino-acid biosynthesis; L-proline biosynthesis; L-glutamate 5-semialdehyde from L-ornithine: step 1/1. Functionally, catalyzes the interconversion of ornithine to glutamate semialdehyde. In Staphylococcus aureus (strain COL), this protein is Ornithine aminotransferase 1.